The sequence spans 1705 residues: Homeobox-DDT domain protein RLT1 (1705 aa).

5 disordered regions span residues 1–53, 118–167, 237–267, 296–322, and 352–414; these read MEMG…QLET, ELPA…EYET, HDPRPRRSHAAARSFHEQQSLDDPSSFTPNM, GPVPRSYVTPGHASRNCSTSQQDMPSP, and GVRK…RKEE. Positions 39–98 form a DNA-binding region, homeobox; sequence VKPKRQMKTPFQLETLEKVYSEEKYPSEATRAELSEKLDLSDRQLQMWFCHRRLKDKKDG. Over residues 136-159 the composition is skewed to low complexity; that stretch reads GSESGCSPYSNSRRNFASGSSSSR. Composition is skewed to polar residues over residues 253–265 and 310–319; these read EQQSLDDPSSFTP and RNCSTSQQDM. One can recognise a DDT domain in the interval 549 to 608; sequence DETVGNLLMVWRFLISFSDVLDLWPFTLDEFIQAFHDYDSRLLGEIHVTLLRSIIRDVED. Residues 731–800 form the HTH HARE-type domain; sequence GTVKFAAFHV…APSTYCVRAP (70 aa). 5 disordered regions span residues 1028–1053, 1198–1229, 1441–1502, 1561–1635, and 1652–1705; these read TRERDSFDRDPSQLLDETKPLEDLSN, VNHSPTDSVSPSSSAISGSNSDSMETSTSIRV, PEDE…KAQS, PKSE…FVDY, and AIEE…SSDS. Positions 1201 to 1220 are enriched in low complexity; that stretch reads SPTDSVSPSSSAISGSNSDS. A compositionally biased stretch (basic and acidic residues) spans 1455–1465; that stretch reads SPFKGKGPREQ. 3 stretches are compositionally biased toward acidic residues: residues 1565–1574, 1611–1628, and 1669–1684; these read EVEEDEEEEE, VDDESDNSVGVESEDEDG, and GEDDAEMSESSEDDDV.

As to quaternary structure, interacts with CHR11 and CHR17. Interacts (via the DDT domain) with CHR11 (via C-terminus). In terms of tissue distribution, highly expressed in growing tissues such as inflorescence and flower meristems, young leaves and floral organs. Expressed in roots, rosette and cauline leaves, stems, flowers, inflorescences and siliques.

The protein localises to the nucleus. In terms of biological role, transcriptional regulator required for the maintenance of the plant vegetative phase. In association with CHR11 or CHR17 may prevent the early activation of the vegetative-to-reproductive transition by regulating key genes that contribute to flower timing, such as FT, SEP1, SEP3, AGL8/FUL, SOC1 and FLC. The protein is Homeobox-DDT domain protein RLT1 of Arabidopsis thaliana (Mouse-ear cress).